A 259-amino-acid polypeptide reads, in one-letter code: Ribonuclease PH (259 aa).

Phosphate-binding positions include Arg-88 and 126 to 128; that span reads GTR.

The protein belongs to the RNase PH family. In terms of assembly, homohexameric ring arranged as a trimer of dimers.

The enzyme catalyses tRNA(n+1) + phosphate = tRNA(n) + a ribonucleoside 5'-diphosphate. Functionally, phosphorolytic 3'-5' exoribonuclease that plays an important role in tRNA 3'-end maturation. Removes nucleotide residues following the 3'-CCA terminus of tRNAs; can also add nucleotides to the ends of RNA molecules by using nucleoside diphosphates as substrates, but this may not be physiologically important. Probably plays a role in initiation of 16S rRNA degradation (leading to ribosome degradation) during starvation. The protein is Ribonuclease PH of Mycolicibacterium smegmatis (strain ATCC 700084 / mc(2)155) (Mycobacterium smegmatis).